The chain runs to 362 residues: MNKVLIAAAGTGGHIFPALAVAEQMRDNGWQVDWLGTQEGRLESRVIPAANFPLHSISMTGVRGHGLKRKLFMPFTLAKAVLQCRRLLKTLQPQVVATFGGYVCAPMGLAAKLLGIPLVVHEQNAIPGMTTRLLAPRANKVMLGLPVALPQWQQYPVVGNPLRKGLLAQAAEQTEKSNTDGALNILVVGGSLGAQVLNEAVPEAVKALEGVELNVLHQCGAEREATTEKAYLGASVLKTLKVTEFIEDMGDAFKNADLVICRAGALTISELAVMGVASILVPLPHAVDDHQSANAKVLESRGAAVLLPQTEVVEGALKQQLKRLLHDRQQLWTMARFARQCAMPEATQRLVNECMEYRQSDD.

Residues 11–13 (TGG), asparagine 124, arginine 163, serine 191, isoleucine 246, and glutamine 291 each bind UDP-N-acetyl-alpha-D-glucosamine.

It belongs to the glycosyltransferase 28 family. MurG subfamily.

It is found in the cell inner membrane. It catalyses the reaction di-trans,octa-cis-undecaprenyl diphospho-N-acetyl-alpha-D-muramoyl-L-alanyl-D-glutamyl-meso-2,6-diaminopimeloyl-D-alanyl-D-alanine + UDP-N-acetyl-alpha-D-glucosamine = di-trans,octa-cis-undecaprenyl diphospho-[N-acetyl-alpha-D-glucosaminyl-(1-&gt;4)]-N-acetyl-alpha-D-muramoyl-L-alanyl-D-glutamyl-meso-2,6-diaminopimeloyl-D-alanyl-D-alanine + UDP + H(+). Its pathway is cell wall biogenesis; peptidoglycan biosynthesis. Its function is as follows. Cell wall formation. Catalyzes the transfer of a GlcNAc subunit on undecaprenyl-pyrophosphoryl-MurNAc-pentapeptide (lipid intermediate I) to form undecaprenyl-pyrophosphoryl-MurNAc-(pentapeptide)GlcNAc (lipid intermediate II). The protein is UDP-N-acetylglucosamine--N-acetylmuramyl-(pentapeptide) pyrophosphoryl-undecaprenol N-acetylglucosamine transferase of Idiomarina loihiensis (strain ATCC BAA-735 / DSM 15497 / L2-TR).